A 595-amino-acid polypeptide reads, in one-letter code: Miltiradiene synthase KSL1, chloroplastic (595 aa).

The N-terminal 47 residues, Met1–Cys47, are a transit peptide targeting the chloroplast. Residues Asp334, Asp338, Asn478, and Glu486 each coordinate Mg(2+). A DDXXD motif motif is present at residues Asp334 to Asp338.

It belongs to the terpene synthase family. Mg(2+) serves as cofactor.

The protein resides in the plastid. The protein localises to the chloroplast. The catalysed reaction is (+)-copalyl diphosphate = miltiradiene + diphosphate. Its pathway is secondary metabolite biosynthesis; terpenoid biosynthesis. Functionally, involved in tanshinone biosynthesis in hairy roots. Catalyzes the conversion of copalyl diphosphate (CPP) to miltiradiene. In Salvia miltiorrhiza (Chinese sage), this protein is Miltiradiene synthase KSL1, chloroplastic.